Here is a 143-residue protein sequence, read N- to C-terminus: Ribosome-binding factor A (143 aa).

Positions 119–129 (AVGDKPAVPRD) are enriched in basic and acidic residues. The disordered stretch occupies residues 119–143 (AVGDKPAVPRDDNDDPVSDNPERDA).

This sequence belongs to the RbfA family. As to quaternary structure, monomer. Binds 30S ribosomal subunits, but not 50S ribosomal subunits or 70S ribosomes.

It is found in the cytoplasm. Functionally, one of several proteins that assist in the late maturation steps of the functional core of the 30S ribosomal subunit. Associates with free 30S ribosomal subunits (but not with 30S subunits that are part of 70S ribosomes or polysomes). Required for efficient processing of 16S rRNA. May interact with the 5'-terminal helix region of 16S rRNA. This is Ribosome-binding factor A from Marinobacter nauticus (strain ATCC 700491 / DSM 11845 / VT8) (Marinobacter aquaeolei).